The sequence spans 483 residues: Lipoamide acyltransferase component of branched-chain alpha-keto acid dehydrogenase complex, mitochondrial (483 aa).

The N-terminal 75 residues, 1-75 (MIARRIWRSH…AMATDSNSGL (75 aa)), are a transit peptide targeting the mitochondrion. In terms of domain architecture, Lipoyl-binding spans 76–150 (IDVPLAQTGE…KVGETLVRLA (75 aa)). Lys-116 is subject to N6-lipoyllysine. The Peripheral subunit-binding (PSBD) domain occupies 183 to 220 (LSTPAVRNLAKDLGIDINVITGTGKDGRVLKEDVLRFS). Active-site residues include His-453 and Asp-457.

This sequence belongs to the 2-oxoacid dehydrogenase family. Forms a 24-polypeptide structural core with octahedral symmetry. It depends on (R)-lipoate as a cofactor. Expressed in the non-photosynthetic organs such as siliques, flowers and roots.

Its subcellular location is the mitochondrion matrix. It catalyses the reaction N(6)-[(R)-dihydrolipoyl]-L-lysyl-[protein] + 2-methylpropanoyl-CoA = N(6)-[(R)-S(8)-2-methylpropanoyldihydrolipoyl]-L-lysyl-[protein] + CoA. The branched-chain alpha-keto dehydrogenase complex catalyzes the overall conversion of alpha-keto acids to acyl-CoA and CO(2). It contains multiple copies of three enzymatic components: branched-chain alpha-keto acid decarboxylase (E1), lipoamide acyltransferase (E2) and lipoamide dehydrogenase (E3). Within this complex, the catalytic function of this enzyme is to accept, and to transfer to coenzyme A, acyl groups that are generated by the branched-chain alpha-keto acid decarboxylase component. Required during sugar starvation and acts under the control of a sugar-sensing mechanism involving Ser/Thr kinases and phosphatases. The sequence is that of Lipoamide acyltransferase component of branched-chain alpha-keto acid dehydrogenase complex, mitochondrial (BCE2) from Arabidopsis thaliana (Mouse-ear cress).